The primary structure comprises 218 residues: Small ribosomal subunit protein uS3 (218 aa).

Residues 38 to 106 form the KH type-2 domain; it reads IRKYIESKLA…RVHINIVEIK (69 aa).

The protein belongs to the universal ribosomal protein uS3 family. In terms of assembly, part of the 30S ribosomal subunit. Forms a tight complex with proteins S10 and S14.

In terms of biological role, binds the lower part of the 30S subunit head. Binds mRNA in the 70S ribosome, positioning it for translation. This Ligilactobacillus salivarius (strain UCC118) (Lactobacillus salivarius) protein is Small ribosomal subunit protein uS3.